The following is a 426-amino-acid chain: Pyrophosphate--fructose 6-phosphate 1-phosphotransferase 2 (426 aa).

Gly-15 is a diphosphate binding site. Position 114 (Asp-114) interacts with Mg(2+). Substrate is bound by residues 140–142, 186–188, Glu-247, and 308–311; these read TID, MGR, and YELR. Asp-142 serves as the catalytic Proton acceptor.

The protein belongs to the phosphofructokinase type A (PFKA) family. PPi-dependent PFK group II subfamily. Clade 'Short' sub-subfamily. Homotetramer. Mg(2+) serves as cofactor.

Its subcellular location is the cytoplasm. It carries out the reaction beta-D-fructose 6-phosphate + diphosphate = beta-D-fructose 1,6-bisphosphate + phosphate + H(+). It functions in the pathway carbohydrate degradation; glycolysis; D-glyceraldehyde 3-phosphate and glycerone phosphate from D-glucose: step 3/4. Its activity is regulated as follows. Non-allosteric. Functionally, catalyzes the phosphorylation of D-fructose 6-phosphate, the first committing step of glycolysis. Uses inorganic phosphate (PPi) as phosphoryl donor instead of ATP like common ATP-dependent phosphofructokinases (ATP-PFKs), which renders the reaction reversible, and can thus function both in glycolysis and gluconeogenesis. Consistently, PPi-PFK can replace the enzymes of both the forward (ATP-PFK) and reverse (fructose-bisphosphatase (FBPase)) reactions. In Trichomonas vaginalis (strain ATCC PRA-98 / G3), this protein is Pyrophosphate--fructose 6-phosphate 1-phosphotransferase 2 (pfk2).